The sequence spans 65 residues: Small ribosomal subunit protein bS21 (65 aa).

The disordered stretch occupies residues 45 to 65 (GRLKRSRSRRRAQRANEERNS). A compositionally biased stretch (basic residues) spans 48–57 (KRSRSRRRAQ).

The protein belongs to the bacterial ribosomal protein bS21 family.

This Chlorobium phaeobacteroides (strain DSM 266 / SMG 266 / 2430) protein is Small ribosomal subunit protein bS21.